The following is a 1266-amino-acid chain: Formin-like protein 13 (1266 aa).

A Phosphatase tensin-type domain is found at 9–193 (YRKPPDGLLE…QYVSRRNLVS (185 aa)). The Phosphocysteine intermediate role is filled by C126. The region spanning 199–337 (DRALTMDCVI…FRVELLFSDM (139 aa)) is the C2 tensin-type domain. Disordered regions lie at residues 497-568 (KPLV…LQHS), 597-825 (KNLI…GKGR), 881-902 (SASAPEQAGKSRLDSSRGPKPE), and 1210-1266 (QLEA…RTAP). A compositionally biased stretch (pro residues) spans 529 to 538 (PPTPSPPHPV). Over residues 617–644 (EPSSKTTNSLLLSPQASPATPTNPSKTV) the composition is skewed to polar residues. Composition is skewed to pro residues over residues 686–698 (LPRPPPPPPPPPM), 706–742 (VPPPPPPAPPAPPTPIVHTSSPPPPPPPPPPPAPPTP), 754–781 (PPAPPAPPRLPTHSASPPPPTAPPPPPL), and 806–815 (PNVPPTPALP). The region spanning 829–1226 (VNLKNSPAKK…KNAAEKEKPK (398 aa)) is the FH2 domain. Basic and acidic residues-rich tracts occupy residues 889–902 (GKSRLDSSRGPKPE), 1210–1248 (QLEAEAKKNAAEKEKPKTGGLDTEIKKPLNEEVKEEKTK), and 1255–1266 (EMSDRLKERTAP).

Belongs to the formin-like family. Class-II subfamily.

This Arabidopsis thaliana (Mouse-ear cress) protein is Formin-like protein 13 (FH13).